The following is a 570-amino-acid chain: Urease subunit alpha (570 aa).

Positions 131 to 570 (GGMDSHIHFI…LPMAQRYFLF (440 aa)) constitute a Urease domain. Positions 136, 138, and 219 each coordinate Ni(2+). At K219 the chain carries N6-carboxylysine. Residue H221 coordinates substrate. Ni(2+) contacts are provided by H248 and H274. The Proton donor role is filled by H322. Ni(2+) is bound at residue D362.

The protein belongs to the metallo-dependent hydrolases superfamily. Urease alpha subunit family. Heterotrimer of UreA (gamma), UreB (beta) and UreC (alpha) subunits. Three heterotrimers associate to form the active enzyme. The cofactor is Ni cation. Post-translationally, carboxylation allows a single lysine to coordinate two nickel ions.

It localises to the cytoplasm. The catalysed reaction is urea + 2 H2O + H(+) = hydrogencarbonate + 2 NH4(+). The protein operates within nitrogen metabolism; urea degradation; CO(2) and NH(3) from urea (urease route): step 1/1. This is Urease subunit alpha from Rhizobium etli (strain ATCC 51251 / DSM 11541 / JCM 21823 / NBRC 15573 / CFN 42).